The sequence spans 149 residues: MKVIFLKDVKGKGKKGEIKDVADGYANNFLFKQGLAIEATPANIKALEAQKQKEQRQAAEELANAKKLKEELEKLTVEIPAKAGEGGRLFGSITSKQIAEALQAQHGLKLDKRKIELADAIRSLGYTNVPVKLHPEVTATLKVHVKEQK.

This sequence belongs to the bacterial ribosomal protein bL9 family.

In terms of biological role, binds to the 23S rRNA. The protein is Large ribosomal subunit protein bL9 of Geobacillus kaustophilus (strain HTA426).